We begin with the raw amino-acid sequence, 373 residues long: Glutamate 5-kinase (373 aa).

Lysine 15 lines the ATP pocket. Substrate contacts are provided by serine 56, aspartate 143, and asparagine 155. Residue 175–176 participates in ATP binding; it reads SD. Residues 281–358 enclose the PUA domain; sequence KGTLTIDAGA…PDVMTILGIS (78 aa).

This sequence belongs to the glutamate 5-kinase family.

The protein localises to the cytoplasm. The enzyme catalyses L-glutamate + ATP = L-glutamyl 5-phosphate + ADP. It participates in amino-acid biosynthesis; L-proline biosynthesis; L-glutamate 5-semialdehyde from L-glutamate: step 1/2. Catalyzes the transfer of a phosphate group to glutamate to form L-glutamate 5-phosphate. This chain is Glutamate 5-kinase, found in Bradyrhizobium diazoefficiens (strain JCM 10833 / BCRC 13528 / IAM 13628 / NBRC 14792 / USDA 110).